A 563-amino-acid chain; its full sequence is Protein disulfide isomerase-like 1-4 (563 aa).

Residues 1–22 (MRSRSLLLVALATLLLHASASA) form the signal peptide. Residues 40 to 64 (NDPDGWLQEGSPDDDDDDDLFHHGQ) form a disordered region. Residues 46–180 (LQEGSPDDDD…IVSWVNKKLA (135 aa)) form the Thioredoxin 1 domain. The N-linked (GlcNAc...) asparagine glycan is linked to Asn-82. Catalysis depends on nucleophile residues Cys-102 and Cys-105. Residues Cys-102 and Cys-105 are joined by a disulfide bond. 2 N-linked (GlcNAc...) asparagine glycosylation sites follow: Asn-185 and Asn-315. Residues 394–523 (FLEEKLTPFY…MYKFIKKHAS (130 aa)) form the Thioredoxin 2 domain. Catalysis depends on nucleophile residues Cys-444 and Cys-447. Cys-444 and Cys-447 are disulfide-bonded. The segment covering 529–542 (KRPDSSATKTEKDQ) has biased composition (basic and acidic residues). The tract at residues 529-563 (KRPDSSATKTEKDQSTASTNLRGERSSGTNFKDEL) is disordered. Residues 543–563 (STASTNLRGERSSGTNFKDEL) show a composition bias toward polar residues. The short motif at 560 to 563 (KDEL) is the Prevents secretion from ER element.

Belongs to the protein disulfide isomerase family.

It localises to the endoplasmic reticulum lumen. It carries out the reaction Catalyzes the rearrangement of -S-S- bonds in proteins.. In terms of biological role, acts as a protein-folding catalyst that interacts with nascent polypeptides to catalyze the formation, isomerization, and reduction or oxidation of disulfide bonds. May play a role in storage protein biogenesis. The polypeptide is Protein disulfide isomerase-like 1-4 (PDIL1-4) (Oryza sativa subsp. japonica (Rice)).